A 379-amino-acid chain; its full sequence is S-(hydroxymethyl)glutathione dehydrogenase (379 aa).

Cys47 serves as a coordination point for Zn(2+). Residue His48 participates in NAD(+) binding. Residues His69, Glu70, Cys99, Cys102, Cys105, Cys113, and Cys176 each coordinate Zn(2+). NAD(+)-binding positions include 201 to 206 (GAGCIG), Asp225, and 296 to 298 (IGV).

Belongs to the zinc-containing alcohol dehydrogenase family. Class-III subfamily. It depends on Zn(2+) as a cofactor.

It carries out the reaction a primary alcohol + NAD(+) = an aldehyde + NADH + H(+). The enzyme catalyses a secondary alcohol + NAD(+) = a ketone + NADH + H(+). The catalysed reaction is S-(hydroxymethyl)glutathione + NADP(+) = S-formylglutathione + NADPH + H(+). It catalyses the reaction S-(hydroxymethyl)glutathione + NAD(+) = S-formylglutathione + NADH + H(+). It carries out the reaction S-nitrosoglutathione + NADH + H(+) = S-(hydroxysulfenamide)glutathione + NAD(+). Its function is as follows. Oxidizes long-chain alcohols and, in the presence of glutathione, is able to oxidize formaldehyde. Also acts as a S-nitroso-glutathione reductase by catalyzing the NADH-dependent reduction of S-nitrosoglutathione, thereby regulating protein S-nitrosylation. This is S-(hydroxymethyl)glutathione dehydrogenase (FLD1) from Komagataella pastoris (Yeast).